The chain runs to 312 residues: MLSSLLITQFIYGTISTIIYSLTVVFLTKNWKHFDNYFLKLYICQFFFNMWMYWNFYITSRLPASTCKDCYLSGWFDSLSKDSGSMFPFKFFIFCQYHLGFMSYSNLFLTSINRFTLIFMPKRYFQIWHYGTYILIALIFITPILFTYPLLVHQAYLEYNPLSDTYVARTQADLPFLYSFILVWMVVTVLLSIIANIICWFKISKYSKAARQQSDYRLFLVSFVTFVINCGVFSIAMLNKISADIDPSKLLLSSRIAQLLSPFANDLLSLSTPYVLIIFSKRIRQSIKNLFIKGTVAPSSITPLQNIPASRI.

A run of 7 helical transmembrane segments spans residues 6–26, 38–58, 92–112, 132–152, 180–200, 218–238, and 259–279; these read LITQ…TVVF, FLKL…NFYI, FIFC…LTSI, TYIL…PLLV, FILV…IICW, LFLV…IAML, and LLSP…LIIF.

It belongs to the nematode receptor-like protein srg family.

The protein localises to the membrane. This chain is Serpentine receptor class gamma-31 (srg-31), found in Caenorhabditis elegans.